Here is a 172-residue protein sequence, read N- to C-terminus: uncharacterized protein (172 aa).

Residues 1 to 17 (MISLDKDENEIEHHNEE) show a composition bias toward basic and acidic residues. The segment at 1-27 (MISLDKDENEIEHHNEENSLVEQETAP) is disordered. The helical transmembrane segment at 129–151 (IVTVLIGIIVAIFVLVVIGIAAF) threads the bilayer.

The protein localises to the membrane. This is an uncharacterized protein from Bacillus subtilis (strain 168).